A 447-amino-acid polypeptide reads, in one-letter code: Phosphoglucosamine mutase (447 aa).

Ser88 serves as the catalytic Phosphoserine intermediate. Residues Ser88, Asp231, Asp233, and Asp235 each coordinate Mg(2+). At Ser88 the chain carries Phosphoserine.

The protein belongs to the phosphohexose mutase family. Requires Mg(2+) as cofactor. In terms of processing, activated by phosphorylation.

It carries out the reaction alpha-D-glucosamine 1-phosphate = D-glucosamine 6-phosphate. Catalyzes the conversion of glucosamine-6-phosphate to glucosamine-1-phosphate. The sequence is that of Phosphoglucosamine mutase from Methanococcus maripaludis (strain C5 / ATCC BAA-1333).